Consider the following 267-residue polypeptide: Mlc titration factor A (267 aa).

Positions 111, 148, 152, and 211 each coordinate Zn(2+).

The protein belongs to the MtfA family. Interacts with Mlc. Requires Zn(2+) as cofactor.

The protein resides in the cytoplasm. Functionally, involved in the modulation of the activity of the glucose-phosphotransferase system (glucose-PTS). Interacts with the transcriptional repressor Mlc, preventing its interaction with DNA and leading to the modulation of expression of genes regulated by Mlc, including ptsG, which encodes the PTS system glucose-specific EIICB component. Shows zinc-dependent metallopeptidase activity. This Yersinia enterocolitica serotype O:8 / biotype 1B (strain NCTC 13174 / 8081) protein is Mlc titration factor A.